We begin with the raw amino-acid sequence, 89 residues long: Protein PerC (89 aa).

Transcriptional activator of eaeA/bfpA expression in enteropathogenic E.coli. This chain is Protein PerC (perC), found in Escherichia coli O111:H-.